A 530-amino-acid chain; its full sequence is 4-alpha-glucanotransferase (530 aa).

Belongs to the disproportionating enzyme family.

Its subcellular location is the cytoplasm. The catalysed reaction is Transfers a segment of a (1-&gt;4)-alpha-D-glucan to a new position in an acceptor, which may be glucose or a (1-&gt;4)-alpha-D-glucan.. The polypeptide is 4-alpha-glucanotransferase (malQ) (Chlamydia caviae (strain ATCC VR-813 / DSM 19441 / 03DC25 / GPIC) (Chlamydophila caviae)).